Consider the following 445-residue polypeptide: 4-hydroxyphenylpyruvate dioxygenase (445 aa).

A compositionally biased stretch (polar residues) spans 1–11; the sequence is MGHQNAAVSEN. The disordered stretch occupies residues 1 to 20; the sequence is MGHQNAAVSENQNHDDGAAS. VOC domains are found at residues 46 to 192 and 223 to 383; these read RFHH…YVSY and RLDH…IFTK. Fe cation contacts are provided by His-226, His-308, and Glu-394.

This sequence belongs to the 4HPPD family. As to quaternary structure, homodimer. It depends on Fe cation as a cofactor.

It localises to the cytoplasm. It carries out the reaction 3-(4-hydroxyphenyl)pyruvate + O2 = homogentisate + CO2. Its pathway is amino-acid degradation; L-phenylalanine degradation; acetoacetate and fumarate from L-phenylalanine: step 3/6. The protein operates within cofactor biosynthesis; prenylquinone biosynthesis. Catalyzes the conversion of 4-hydroxyphenylpyruvic acid to homogentisic acid, one of the steps in tyrosine catabolism. The sequence is that of 4-hydroxyphenylpyruvate dioxygenase (HPD) from Arabidopsis thaliana (Mouse-ear cress).